Reading from the N-terminus, the 149-residue chain is Transcriptional repressor NrdR (149 aa).

A zinc finger spans residues 3–34 (CPFCSATDTKVIDSRLVADGHQVRRRRECTLC). The ATP-cone domain occupies 49–139 (PRVIKRDDTR…VYRAFEDVSQ (91 aa)).

Belongs to the NrdR family. Zn(2+) serves as cofactor.

Negatively regulates transcription of bacterial ribonucleotide reductase nrd genes and operons by binding to NrdR-boxes. The sequence is that of Transcriptional repressor NrdR from Shewanella denitrificans (strain OS217 / ATCC BAA-1090 / DSM 15013).